We begin with the raw amino-acid sequence, 829 residues long: 1,4-alpha-glucan branching enzyme GlgB (829 aa).

Aspartate 405 functions as the Nucleophile in the catalytic mechanism. The Proton donor role is filled by glutamate 458. The tract at residues alanine 758 to alanine 829 is disordered. Composition is skewed to low complexity over residues valine 778–valine 789 and valine 810–threonine 820.

Belongs to the glycosyl hydrolase 13 family. GlgB subfamily. In terms of assembly, monomer.

The enzyme catalyses Transfers a segment of a (1-&gt;4)-alpha-D-glucan chain to a primary hydroxy group in a similar glucan chain.. It participates in glycan biosynthesis; glycogen biosynthesis. Its function is as follows. Catalyzes the formation of the alpha-1,6-glucosidic linkages in glycogen by scission of a 1,4-alpha-linked oligosaccharide from growing alpha-1,4-glucan chains and the subsequent attachment of the oligosaccharide to the alpha-1,6 position. This chain is 1,4-alpha-glucan branching enzyme GlgB, found in Actinobacillus succinogenes (strain ATCC 55618 / DSM 22257 / CCUG 43843 / 130Z).